The following is a 506-amino-acid chain: FAD-linked oxidoreductase chry5 (506 aa).

A signal peptide spans 1–17; the sequence is MHLQALTGLATLAVTAA. The FAD-binding PCMH-type domain maps to 59–241; it reads LDKPTVNIVA…TSVTSKTYDA (183 aa). N-linked (GlcNAc...) asparagine glycosylation is found at Asn205, Asn272, Asn281, Asn389, and Asn431.

This sequence belongs to the oxygen-dependent FAD-linked oxidoreductase family. The cofactor is FAD.

Its pathway is pigment biosynthesis. FAD-linked oxidoreductase; part of the gene cluster that mediates the biosynthesis of the yellow pigment chrysogine. Pyruvic acid and anthranilic acid are likely substrates for the nonribosomal peptide synthetase chry1/NRPS14, with pyruvic acid adenylated by the first A domain and anthranilic acid by the second. If pyruvic acid and anthranilic acid are merged and released from chry1/NRPS14 by hydrolysis, a subsequent amidation would lead to 2-pyruvoylaminobenzamide. This process is probably catalyzed by the amidotransferase chry2 using glutamine as amino donor. The dehydrogenase chry5 that has a terminal berberine bridge domain for C-N cyclization could catalyze the cyclization of 2-pyruvoylaminobenzamide to yield acetyl-4(3H)-quinazolidinone. A final reduction of acetyl-4(3H)-quinazolidinone catalyzed by the oxidoreductase chry4 would result in chrysogine. This chain is FAD-linked oxidoreductase chry5, found in Gibberella zeae (strain ATCC MYA-4620 / CBS 123657 / FGSC 9075 / NRRL 31084 / PH-1) (Wheat head blight fungus).